The sequence spans 146 residues: Snaclec echicetin subunit beta (146 aa).

Residues 1-23 (MGRFISVSFGLLVLLLSLSGTGA) form the signal peptide. Cystine bridges form between Cys25–Cys36, Cys53–Cys142, and Cys119–Cys134. Residues 32-143 (YEGYCYKVFK…CTWTFSFVCK (112 aa)) enclose the C-type lectin domain.

The protein belongs to the snaclec family. Heterodimer of subunits alpha and beta; disulfide-linked. Expressed by the venom gland.

Its subcellular location is the secreted. Binding of echicetin to glycoprotein Ibalpha (GP1BA) receptor on platelets alone results in inhibition of platelet aggregation, while binding to both GPIba receptor and IgMk promotes platelet aggregation and signal transduction. The polypeptide is Snaclec echicetin subunit beta (Echis carinatus (Saw-scaled viper)).